Reading from the N-terminus, the 219-residue chain is Putative zinc metalloprotease YwhC (219 aa).

A helical transmembrane segment spans residues 4 to 24; that stretch reads FLYYPLSLMPYLVITLIVSFT. His26 is a Zn(2+) binding site. The active site involves Glu27. His30 is a Zn(2+) binding site. A run of 4 helical transmembrane segments spans residues 52 to 72, 94 to 114, 132 to 152, and 180 to 200; these read PIKH…FGWA, IAGP…LVLM, FFSI…LPLP, and FIVF…WPML.

This sequence belongs to the peptidase M50B family. Requires Zn(2+) as cofactor.

The protein resides in the cell membrane. This chain is Putative zinc metalloprotease YwhC (ywhC), found in Bacillus subtilis (strain 168).